The primary structure comprises 57 residues: UPF0391 membrane protein BRADO2787 (57 aa).

Transmembrane regions (helical) follow at residues 6 to 26 (WALL…TGVS) and 35 to 55 (ILFY…LTIF).

This sequence belongs to the UPF0391 family.

The protein localises to the cell membrane. The chain is UPF0391 membrane protein BRADO2787 from Bradyrhizobium sp. (strain ORS 278).